The sequence spans 360 residues: BOLA class I histocompatibility antigen, alpha chain BL3-6 (360 aa).

Residues 1–21 form the signal peptide; the sequence is MGPRALLLLLSGVLILTETRA. The tract at residues 22–111 is alpha-1; it reads GSHSLRYFST…LRGYYNQSEA (90 aa). At 22–308 the chain is on the extracellular side; the sequence is GSHSLRYFST…QPSFLTMGII (287 aa). Asparagine 107 is a glycosylation site (N-linked (GlcNAc...) asparagine). The alpha-2 stretch occupies residues 112-203; sequence GSHTLQWMSG…ENGKDTLLRA (92 aa). 2 cysteine pairs are disulfide-bonded: cysteine 122–cysteine 185 and cysteine 224–cysteine 280. The alpha-3 stretch occupies residues 204–295; it reads DPPKAHVTHH…GLQEPLTLRW (92 aa). Positions 206-292 constitute an Ig-like C1-type domain; the sequence is PKAHVTHHPI…QHEGLQEPLT (87 aa). The interval 296–308 is connecting peptide; the sequence is EPPQPSFLTMGII. The helical transmembrane segment at 309-328 threads the bilayer; sequence VGLVLLVVTGAVVAGVVICM. At 329 to 360 the chain is on the cytoplasmic side; the sequence is KKRSGEKGGNYIQASSSDSAQGSDVSLTVPKV. A disordered region spans residues 340-360; sequence IQASSSDSAQGSDVSLTVPKV. Over residues 341–354 the composition is skewed to low complexity; sequence QASSSDSAQGSDVS. Phosphoserine occurs at positions 351 and 354.

Belongs to the MHC class I family. In terms of assembly, heterodimer of an alpha chain and a beta chain (beta-2-microglobulin).

It localises to the membrane. Involved in the presentation of foreign antigens to the immune system. The protein is BOLA class I histocompatibility antigen, alpha chain BL3-6 of Bos taurus (Bovine).